Consider the following 877-residue polypeptide: Kinetochore null protein 2 (877 aa).

In terms of domain architecture, SANTA spans 20 to 107 (IRLNLWSMKF…SNGIPENWAD (88 aa)). 3 disordered regions span residues 122–315 (RPIQ…SKSV), 338–535 (FEST…ESLN), and 549–604 (MMFG…NDSI). The stretch at 153–211 (QKNSENEKERNRREREEQQTKERERRLEEEKQRRDAEAEAERRRKEEEELEEANYTLRA) forms a coiled coil. Basic and acidic residues predominate over residues 156 to 199 (SENEKERNRREREEQQTKERERRLEEEKQRRDAEAEAERRRKEE). Over residues 251–279 (IASSTPQQKQRLADGANNQIPPTQKSQDS) the composition is skewed to polar residues. Basic and acidic residues-rich tracts occupy residues 359–385 (EPRH…DNSR), 394–444 (RRHE…RGRD), and 453–480 (VRFE…DYGR). Positions 491–549 (EDEEKLNAIVRREKELRNRLQKSQKASSSSYRHRSNSSDAEESLNEWDIENQELLDNSM) form a coiled coil. Low complexity predominate over residues 511-520 (QKSQKASSSS). The span at 573 to 583 (RSKPANSTKSP) shows a compositional bias: polar residues. The span at 592 to 601 (ASLEDNRDLN) shows a compositional bias: basic and acidic residues. A Myb-like domain is found at 617-678 (VAKKITWRKQ…AITRLKWVEP (62 aa)). Disordered stretches follow at residues 757 to 785 (RGGT…FNSP) and 808 to 877 (MQAR…TSIY). 2 stretches are compositionally biased toward polar residues: residues 775–785 (SRGNNSTFNSP) and 819–836 (SSSM…TSIS). Residues 856 to 871 (EDDENEDNDDDDDMRE) show a composition bias toward acidic residues.

The protein belongs to the KNL2 family. In terms of assembly, interacts with hcp-3.

It is found in the nucleus. The protein localises to the chromosome. Its subcellular location is the centromere. It localises to the kinetochore. Required for the recruitment of hcp-3, hcp-4, knl-1, bub-1 and lin-53 to kinetochores, kinetochore assembly, chromosome condensation and chromosome segregation in meiosis and mitosis. The polypeptide is Kinetochore null protein 2 (Caenorhabditis elegans).